Consider the following 202-residue polypeptide: Na(+)-translocating NADH-quinone reductase subunit E (202 aa).

Helical transmembrane passes span 11 to 31 (SVFI…FIAI), 35 to 55 (VETA…TVPA), 81 to 101 (FLGF…LEML), 114 to 134 (GIYL…LFMV), 144 to 164 (VVYG…LAGI), and 180 to 200 (LGIA…FSGI).

Belongs to the NqrDE/RnfAE family. In terms of assembly, composed of six subunits; NqrA, NqrB, NqrC, NqrD, NqrE and NqrF.

The protein resides in the cell inner membrane. The catalysed reaction is a ubiquinone + n Na(+)(in) + NADH + H(+) = a ubiquinol + n Na(+)(out) + NAD(+). NQR complex catalyzes the reduction of ubiquinone-1 to ubiquinol by two successive reactions, coupled with the transport of Na(+) ions from the cytoplasm to the periplasm. NqrA to NqrE are probably involved in the second step, the conversion of ubisemiquinone to ubiquinol. In Azotobacter vinelandii (strain DJ / ATCC BAA-1303), this protein is Na(+)-translocating NADH-quinone reductase subunit E.